A 466-amino-acid polypeptide reads, in one-letter code: NADPH:adrenodoxin oxidoreductase, mitochondrial (466 aa).

FAD is bound by residues Ala-40, Glu-61, Leu-69, and Leu-105. NADP(+) is bound by residues 176-179, 220-221, and Glu-232; these read QGNV and RR. FAD-binding positions include Trp-379 and 386–388; that span reads GVI. Gly-386 lines the NADP(+) pocket.

This sequence belongs to the ferredoxin--NADP reductase type 1 family. It depends on FAD as a cofactor. In terms of tissue distribution, expressed predominantly in prothoracic gland of the larval ring gland and nurse cells of the adult ovary. Low expression is all adult tissues examined.

It is found in the mitochondrion inner membrane. It catalyses the reaction 2 reduced [adrenodoxin] + NADP(+) + H(+) = 2 oxidized [adrenodoxin] + NADPH. The protein operates within steroid metabolism; cholesterol metabolism. Its function is as follows. Required for synthesis of steroid hormones, for olfactory sensory behavior and completion of the second larval molt (a steroid mediated developmental transition) and pupariation. This chain is NADPH:adrenodoxin oxidoreductase, mitochondrial (dare), found in Drosophila melanogaster (Fruit fly).